Here is a 1046-residue protein sequence, read N- to C-terminus: Translation initiation factor IF-2 (1046 aa).

A disordered region spans residues Glu-49 to Gly-448. The segment covering Pro-52–Arg-71 has biased composition (low complexity). Pro residues predominate over residues Arg-94–Leu-111. Low complexity-rich tracts occupy residues Pro-112 to Val-139 and Pro-147 to Pro-159. The span at Ala-160–Ala-176 shows a compositional bias: pro residues. The span at Pro-177–Pro-187 shows a compositional bias: low complexity. Positions Pro-188 to Pro-206 are enriched in pro residues. Residues Arg-210 to Gly-222 show a composition bias toward gly residues. The span at Gly-223–Ala-235 shows a compositional bias: pro residues. Residues Ser-244–Ser-253 are compositionally biased toward low complexity. Composition is skewed to pro residues over residues Ser-260 to Gly-281 and Arg-304 to Pro-314. Low complexity predominate over residues Pro-320–Gly-333. Residues Gly-334–Gly-414 show a composition bias toward gly residues. Over residues Arg-415–Lys-426 the composition is skewed to basic residues. One can recognise a tr-type G domain in the interval Ala-539–Asp-711. The segment at Gly-548–Thr-555 is G1. GTP is bound at residue Gly-548–Thr-555. Residues Gly-573–His-577 form a G2 region. The tract at residues Asp-598–Gly-601 is G3. Residues Asp-598–His-602 and Asn-652–Asp-655 each bind GTP. Residues Asn-652–Asp-655 are G4. The segment at Ser-688–Arg-690 is G5.

This sequence belongs to the TRAFAC class translation factor GTPase superfamily. Classic translation factor GTPase family. IF-2 subfamily.

Its subcellular location is the cytoplasm. One of the essential components for the initiation of protein synthesis. Protects formylmethionyl-tRNA from spontaneous hydrolysis and promotes its binding to the 30S ribosomal subunits. Also involved in the hydrolysis of GTP during the formation of the 70S ribosomal complex. The chain is Translation initiation factor IF-2 from Parafrankia sp. (strain EAN1pec).